A 285-amino-acid chain; its full sequence is Extracellular metalloprotease SMAC_06893 (285 aa).

Residues 1–18 (MQIKSLLLAAAAAPAALG) form the signal peptide. Position 197 (His197) interacts with Zn(2+). The active site involves Glu198. His201 contacts Zn(2+). Cys233 and Cys260 are disulfide-bonded. The N-linked (GlcNAc...) asparagine glycan is linked to Asn282.

This sequence belongs to the peptidase M43B family.

The protein localises to the secreted. Secreted metalloproteinase that allows assimilation of proteinaceous substrates. The chain is Extracellular metalloprotease SMAC_06893 from Sordaria macrospora (strain ATCC MYA-333 / DSM 997 / K(L3346) / K-hell).